We begin with the raw amino-acid sequence, 276 residues long: Bis(5'-nucleosyl)-tetraphosphatase, symmetrical (276 aa).

It belongs to the Ap4A hydrolase family.

It carries out the reaction P(1),P(4)-bis(5'-adenosyl) tetraphosphate + H2O = 2 ADP + 2 H(+). Hydrolyzes diadenosine 5',5'''-P1,P4-tetraphosphate to yield ADP. In Dechloromonas aromatica (strain RCB), this protein is Bis(5'-nucleosyl)-tetraphosphatase, symmetrical.